Here is a 429-residue protein sequence, read N- to C-terminus: GTPase Obg (429 aa).

An Obg domain is found at 1-158 (MFVDQVKIYV…RNVQLELKVL (158 aa)). The interval 124–145 (RGNKRFATPANPAPELSENGEP) is disordered. One can recognise an OBG-type G domain in the interval 159-329 (ADVGLVGFPS…LLLAIADKLE (171 aa)). GTP-binding positions include 165 to 172 (GFPSVGKS), 190 to 194 (FTTIV), 212 to 215 (DLPG), 282 to 285 (NKMD), and 310 to 312 (SAV). Ser-172 and Thr-192 together coordinate Mg(2+). The region spanning 351–429 (KYVADEPDFE…LLDYEFEFMD (79 aa)) is the OCT domain.

This sequence belongs to the TRAFAC class OBG-HflX-like GTPase superfamily. OBG GTPase family. In terms of assembly, monomer. The cofactor is Mg(2+).

It is found in the cytoplasm. An essential GTPase which binds GTP, GDP and possibly (p)ppGpp with moderate affinity, with high nucleotide exchange rates and a fairly low GTP hydrolysis rate. Plays a role in control of the cell cycle, stress response, ribosome biogenesis and in those bacteria that undergo differentiation, in morphogenesis control. This is GTPase Obg from Listeria monocytogenes serotype 4a (strain HCC23).